Consider the following 566-residue polypeptide: Membrane protein insertase YidC (566 aa).

The next 5 membrane-spanning stretches (helical) occupy residues 3 to 23 (IKRIILYVIVALLAIALFNAW), 346 to 366 (GWLWPISMLLFWILSSVHAVV), 369 to 389 (WGWSIIITTILIKIVFYWFSA), 436 to 456 (GGCLPMLIQVPVFIAFYYVII), and 509 to 529 (MWILPVIFTVFFINFPAGLVL).

Belongs to the OXA1/ALB3/YidC family. Type 1 subfamily. As to quaternary structure, interacts with the Sec translocase complex via SecD. Specifically interacts with transmembrane segments of nascent integral membrane proteins during membrane integration.

The protein localises to the cell inner membrane. Functionally, required for the insertion and/or proper folding and/or complex formation of integral membrane proteins into the membrane. Involved in integration of membrane proteins that insert both dependently and independently of the Sec translocase complex, as well as at least some lipoproteins. Aids folding of multispanning membrane proteins. This is Membrane protein insertase YidC from Coxiella burnetii (strain Dugway 5J108-111).